The primary structure comprises 157 residues: Protein Smg homolog (157 aa).

Belongs to the Smg family.

The polypeptide is Protein Smg homolog (Shewanella putrefaciens (strain CN-32 / ATCC BAA-453)).